A 298-amino-acid polypeptide reads, in one-letter code: Glutamyl-Q tRNA(Asp) synthetase (298 aa).

L-glutamate contacts are provided by residues 9-13 (RFAPS) and glutamate 45. Positions 12-22 (PSPSGELHFGS) match the 'HIGH' region motif. Zn(2+)-binding residues include cysteine 101, cysteine 103, tyrosine 115, and cysteine 119. Tyrosine 172 and arginine 190 together coordinate L-glutamate. Positions 228-232 (KLSKQ) match the 'KMSKS' region motif. Lysine 231 is a binding site for ATP.

This sequence belongs to the class-I aminoacyl-tRNA synthetase family. GluQ subfamily. The cofactor is Zn(2+).

Functionally, catalyzes the tRNA-independent activation of glutamate in presence of ATP and the subsequent transfer of glutamate onto a tRNA(Asp). Glutamate is transferred on the 2-amino-5-(4,5-dihydroxy-2-cyclopenten-1-yl) moiety of the queuosine in the wobble position of the QUC anticodon. This Citrobacter koseri (strain ATCC BAA-895 / CDC 4225-83 / SGSC4696) protein is Glutamyl-Q tRNA(Asp) synthetase.